The following is a 74-amino-acid chain: Putative membrane protein insertion efficiency factor (74 aa).

This sequence belongs to the UPF0161 family.

It localises to the cell inner membrane. Its function is as follows. Could be involved in insertion of integral membrane proteins into the membrane. This is Putative membrane protein insertion efficiency factor from Anaeromyxobacter sp. (strain Fw109-5).